Consider the following 676-residue polypeptide: Probable potassium transport system protein Kup (676 aa).

Transmembrane regions (helical) follow at residues 14 to 34 (GLLI…LYVM), 56 to 76 (ISLI…IIAL), 97 to 117 (AAWL…DGTL), 142 to 162 (VSNQ…LFSI), 173 to 193 (AFGP…LINI), 219 to 239 (AGFA…ALYS), 252 to 272 (SWPF…VWIL), 296 to 316 (LASI…LITG), 345 to 365 (IYIP…VLFF), 376 to 396 (GLSI…WLVL), 402 to 422 (LANL…MGSS), and 429 to 449 (GGYV…VWYF).

This sequence belongs to the HAK/KUP transporter (TC 2.A.72) family.

It localises to the cell membrane. It catalyses the reaction K(+)(in) + H(+)(in) = K(+)(out) + H(+)(out). In terms of biological role, transport of potassium into the cell. Likely operates as a K(+):H(+) symporter. The polypeptide is Probable potassium transport system protein Kup (Lactobacillus delbrueckii subsp. bulgaricus (strain ATCC BAA-365 / Lb-18)).